Consider the following 256-residue polypeptide: Type III pantothenate kinase (256 aa).

6–13 provides a ligand contact to ATP; it reads DVGNTNTV. Substrate contacts are provided by residues Tyr-100 and 107–110; that span reads GADR. Asp-109 serves as the catalytic Proton acceptor. Residue Asp-129 participates in K(+) binding. Thr-132 provides a ligand contact to ATP. Thr-184 serves as a coordination point for substrate.

The protein belongs to the type III pantothenate kinase family. Homodimer. The cofactor is NH4(+). K(+) is required as a cofactor.

Its subcellular location is the cytoplasm. It catalyses the reaction (R)-pantothenate + ATP = (R)-4'-phosphopantothenate + ADP + H(+). It participates in cofactor biosynthesis; coenzyme A biosynthesis; CoA from (R)-pantothenate: step 1/5. In terms of biological role, catalyzes the phosphorylation of pantothenate (Pan), the first step in CoA biosynthesis. This Myxococcus xanthus (strain DK1622) protein is Type III pantothenate kinase.